A 113-amino-acid polypeptide reads, in one-letter code: U11-theraphotoxin-Hhn1n (113 aa).

The first 21 residues, 1 to 21, serve as a signal peptide directing secretion; sequence MNTVRVTFLLVFVLAVSLGQA. The propeptide occupies 22–74; it reads DKDENRMEMQEKTEQGKSYLDFAENLLLQKLEELEAKLLEEDSEESRNSRQKR. A compositionally biased stretch (basic and acidic residues) spans 60–69; it reads LEEDSEESRN. The interval 60-83 is disordered; the sequence is LEEDSEESRNSRQKRCIGEGVPCD. 2 disulfides stabilise this stretch: Cys75/Cys90 and Cys89/Cys110.

Belongs to the neurotoxin 14 (magi-1) family. 01 (HNTX-16) subfamily. Expressed by the venom gland.

It localises to the secreted. Functionally, probable ion channel inhibitor. In Cyriopagopus hainanus (Chinese bird spider), this protein is U11-theraphotoxin-Hhn1n.